Reading from the N-terminus, the 418-residue chain is Serine hydroxymethyltransferase (418 aa).

Residues Leu-121 and 125–127 (GHL) contribute to the (6S)-5,6,7,8-tetrahydrofolate site. Lys-230 is subject to N6-(pyridoxal phosphate)lysine. Residue 356 to 358 (SPF) participates in (6S)-5,6,7,8-tetrahydrofolate binding.

The protein belongs to the SHMT family. Homodimer. Pyridoxal 5'-phosphate is required as a cofactor.

The protein localises to the cytoplasm. The catalysed reaction is (6R)-5,10-methylene-5,6,7,8-tetrahydrofolate + glycine + H2O = (6S)-5,6,7,8-tetrahydrofolate + L-serine. The protein operates within one-carbon metabolism; tetrahydrofolate interconversion. It functions in the pathway amino-acid biosynthesis; glycine biosynthesis; glycine from L-serine: step 1/1. Catalyzes the reversible interconversion of serine and glycine with tetrahydrofolate (THF) serving as the one-carbon carrier. This reaction serves as the major source of one-carbon groups required for the biosynthesis of purines, thymidylate, methionine, and other important biomolecules. Also exhibits THF-independent aldolase activity toward beta-hydroxyamino acids, producing glycine and aldehydes, via a retro-aldol mechanism. This is Serine hydroxymethyltransferase from Shewanella sediminis (strain HAW-EB3).